A 462-amino-acid polypeptide reads, in one-letter code: Gamma-aminobutyric acid receptor subunit alpha-5 (462 aa).

An N-terminal signal peptide occupies residues 1–31 (MDNGMFSGFIMIKNLLLFCISMNLSSHFGFS). Over 32–260 (QMPTSSVKDE…FHLKRKIGYF (229 aa)) the chain is Extracellular. An N-linked (GlcNAc...) asparagine glycan is attached at Asn45. Arg101 contacts 4-aminobutanoate. Asn145 carries N-linked (GlcNAc...) asparagine glycosylation. Thr164 is a binding site for 4-aminobutanoate. Cys173 and Cys187 form a disulfide bridge. Residues Asn207 and Asn236 are each glycosylated (N-linked (GlcNAc...) asparagine). A helical membrane pass occupies residues 261–281 (VIQTYLPCIMTVILSQVSFWL). The Cytoplasmic segment spans residues 282–286 (NRESV). Residues 287-308 (PARTVFGVTTVLTMTTLSISAR) traverse the membrane as a helical segment. At 309–318 (NSLPKVAYAT) the chain is on the extracellular side. Residues 319-340 (AMDWFIAVCYAFVFSALIEFAT) form a helical membrane-spanning segment. The Cytoplasmic portion of the chain corresponds to 341–427 (VNYFTKRGWA…TYNSISKIDK (87 aa)). Residue Lys355 forms a Glycyl lysine isopeptide (Lys-Gly) (interchain with G-Cter in ubiquitin) linkage. Residues 377-412 (FTTGKMSHPPNIPKEQTPAGTSNTTSVSVKPSEEKT) form a disordered region. The chain crosses the membrane as a helical span at residues 428 to 448 (MSRIVFPVLFGTFNLVYWATY). The Extracellular segment spans residues 449–462 (LNREPVIKGAASPK).

This sequence belongs to the ligand-gated ion channel (TC 1.A.9) family. Gamma-aminobutyric acid receptor (TC 1.A.9.5) subfamily. GABRA5 sub-subfamily. As to quaternary structure, heteropentamer, formed by a combination of alpha (GABRA1-6), beta (GABRB1-3), gamma (GABRG1-3), delta (GABRD), epsilon (GABRE), rho (GABRR1-3), pi (GABRP) and theta (GABRQ) chains, each subunit exhibiting distinct physiological and pharmacological properties.

Its subcellular location is the postsynaptic cell membrane. It localises to the cell membrane. The catalysed reaction is chloride(in) = chloride(out). Functionally, alpha subunit of the heteropentameric ligand-gated chloride channel gated by gamma-aminobutyric acid (GABA), a major inhibitory neurotransmitter in the brain. GABA-gated chloride channels, also named GABA(A) receptors (GABAAR), consist of five subunits arranged around a central pore and contain GABA active binding site(s) located at the alpha and beta subunit interface(s). When activated by GABA, GABAARs selectively allow the flow of chloride anions across the cell membrane down their electrochemical gradient. GABAARs containing alpha-5/GABRA5 subunits are mainly extrasynaptic and contribute to the tonic GABAergic inhibition in the hippocampus. Extrasynaptic alpha-5-containing GABAARs in CA1 pyramidal neurons play a role in learning and memory processes. This chain is Gamma-aminobutyric acid receptor subunit alpha-5, found in Homo sapiens (Human).